A 753-amino-acid polypeptide reads, in one-letter code: MDSLQTAQMVSLSAELGSNNLELAEPEEPGTSAAAGQSAAHPEEVTPEGSQALGAQEPEQSLPLAVPTPLECKVLLTQADALASEGHLREALEVYRQLSERQQLVAEQLEQLVRCLADSVPQEELASDSSGTSSCCAAALKEAGEAAAVAPEVWDGFKCKKCHGFLSDPVSLWCGHTFCKLCLERGRAADRRCALCGVKLSALMAASGRARGPRRAGQPAPLQLRVNVVLSGLLGKLFPGPARASQLRHEGNRLFREHQVEAALLKYNEAVRLAPNDHLLYSNRSQIYFTLESHEDALHDAEIACKLRPMGFKAHFRKAQALATLGKVKEALKEFLYCVSLDGKNKSARSEAQRENLELPHCSNQEGAAAAEESSSLANSAQGKVSSKEDRKKDQEGEDRDAASVRTGKCQEKKRNRCQIETQEDTELPNKVSKQDFPAEQGAKPDLSNPLGSFDASDLECSLCMRLFYEPVTTPCGHTFCLKCLERCLDHNAKCPLCKDVLLQCLPSRKYSKNVILEELIATFLPEEFKERKRLYEEEMEELSNLNKNVPIFVCTMAYPTVPCPLHIFEPCYRLMIRRCIETGTRQFGMCLGDPVKGFVEYGCILEIRNVQFFSDGRSVVDSIGKRRFKVLHQGQRDGYNTADIEYIEDQKVQGDDCAELMGLHNCVYEQASSWFHSLKASLKNRILNHFGPMPEKDEDPQVNPNGPAWCWWTLAVLPLESRAQLPFLAMRSLKDRLNGIRRILAFISRNQN.

A disordered region spans residues 17–57 (GSNNLELAEPEEPGTSAAAGQSAAHPEEVTPEGSQALGAQE). The TPR 1 repeat unit spans residues 72 to 105 (CKVLLTQADALASEGHLREALEVYRQLSERQQLV). The RING-type 1 zinc-finger motif lies at 159-197 (CKKCHGFLSDPVSLWCGHTFCKLCLERGRAADRRCALCG). TPR repeat units lie at residues 244–277 (ASQLRHEGNRLFREHQVEAALLKYNEAVRLAPND), 279–311 (LLYSNRSQIYFTLESHEDALHDAEIACKLRPMG), and 313–345 (KAHFRKAQALATLGKVKEALKEFLYCVSLDGKN). The tract at residues 351–450 (EAQRENLELP…QGAKPDLSNP (100 aa)) is disordered. Low complexity predominate over residues 363 to 382 (SNQEGAAAAEESSSLANSAQ). A compositionally biased stretch (basic and acidic residues) spans 386 to 413 (SSKEDRKKDQEGEDRDAASVRTGKCQEK). An RING-type 2 zinc finger spans residues 461 to 499 (CSLCMRLFYEPVTTPCGHTFCLKCLERCLDHNAKCPLCK). In terms of domain architecture, Lon N-terminal spans 540–749 (MEELSNLNKN…GIRRILAFIS (210 aa)).

This is LON peptidase N-terminal domain and RING finger protein 3 (Lonrf3) from Mus musculus (Mouse).